A 122-amino-acid chain; its full sequence is MSLTNEQIVDAIAEKSLMEVMELVKAIEEKFGVSAAAPVAVAAAAGPAAAVEEQTEFTVTLKSAGDKKVEVIKAVRAITGLGLKEAKDLAEAGGVLKDAASKDEAEKMKKDLEAAGATVEVK.

The protein belongs to the bacterial ribosomal protein bL12 family. In terms of assembly, homodimer. Part of the ribosomal stalk of the 50S ribosomal subunit. Forms a multimeric L10(L12)X complex, where L10 forms an elongated spine to which 2 to 4 L12 dimers bind in a sequential fashion. Binds GTP-bound translation factors.

Functionally, forms part of the ribosomal stalk which helps the ribosome interact with GTP-bound translation factors. Is thus essential for accurate translation. The polypeptide is Large ribosomal subunit protein bL12 (Stenotrophomonas maltophilia (strain R551-3)).